The sequence spans 189 residues: DAN domain family member 5 (189 aa).

The first 22 residues, 1–22, serve as a signal peptide directing secretion; that stretch reads MLLGQLSTLLCLLSGALPTGSG. Residue Asn38 is glycosylated (N-linked (GlcNAc...) asparagine). 4 disulfides stabilise this stretch: Cys101–Cys148, Cys115–Cys162, Cys125–Cys183, and Cys129–Cys185. A CTCK domain is found at 101–186; that stretch reads CKAVPFVQVF…TMLIEGCHCS (86 aa).

It belongs to the DAN family. Expressed in the retina, in inner segments of photoreceptors, at or close to the outer plexiform layer and in the ganglion cell layer (at protein level).

The protein resides in the secreted. Antagonist of the extracellular signaling protein NODAL, which is required for correct left-right patterning during embryonic development. Antagonist of BMP and TGF-beta signaling. Independently of its role in left-right axis establishment, plays a role during heart development, possibly through the regulation of TGF-beta/Nodal signaling pathway. Displays anti-angiogenic activity by inhibiting endothelial sprouting, migration, and proliferation. Once internalized by endothelial cells, may alter their redox and glycolytic balance. This Homo sapiens (Human) protein is DAN domain family member 5 (DAND5).